The following is a 250-amino-acid chain: tRNA (guanine-N(1)-)-methyltransferase (250 aa).

S-adenosyl-L-methionine contacts are provided by residues Gly116 and 136–141 (IGDYVL).

This sequence belongs to the RNA methyltransferase TrmD family. In terms of assembly, homodimer.

It localises to the cytoplasm. It carries out the reaction guanosine(37) in tRNA + S-adenosyl-L-methionine = N(1)-methylguanosine(37) in tRNA + S-adenosyl-L-homocysteine + H(+). Functionally, specifically methylates guanosine-37 in various tRNAs. This Pseudomonas putida (strain ATCC 700007 / DSM 6899 / JCM 31910 / BCRC 17059 / LMG 24140 / F1) protein is tRNA (guanine-N(1)-)-methyltransferase.